Here is a 104-residue protein sequence, read N- to C-terminus: Large ribosomal subunit protein uL24 (104 aa).

It belongs to the universal ribosomal protein uL24 family. As to quaternary structure, part of the 50S ribosomal subunit.

One of two assembly initiator proteins, it binds directly to the 5'-end of the 23S rRNA, where it nucleates assembly of the 50S subunit. Functionally, one of the proteins that surrounds the polypeptide exit tunnel on the outside of the subunit. This is Large ribosomal subunit protein uL24 from Pseudomonas savastanoi pv. phaseolicola (strain 1448A / Race 6) (Pseudomonas syringae pv. phaseolicola (strain 1448A / Race 6)).